A 550-amino-acid chain; its full sequence is Urocanate hydratase (550 aa).

NAD(+) is bound by residues 48-49, Gln126, 172-174, Glu192, Arg197, 238-239, 259-263, 268-269, and Tyr317; these read GG, GMG, NA, QTSAH, and YL. Cys405 is a catalytic residue. Gly487 contacts NAD(+).

This sequence belongs to the urocanase family. It depends on NAD(+) as a cofactor.

It is found in the cytoplasm. The catalysed reaction is 4-imidazolone-5-propanoate = trans-urocanate + H2O. It functions in the pathway amino-acid degradation; L-histidine degradation into L-glutamate; N-formimidoyl-L-glutamate from L-histidine: step 2/3. Functionally, catalyzes the conversion of urocanate to 4-imidazolone-5-propionate. In Saccharopolyspora erythraea (strain ATCC 11635 / DSM 40517 / JCM 4748 / NBRC 13426 / NCIMB 8594 / NRRL 2338), this protein is Urocanate hydratase.